Reading from the N-terminus, the 254-residue chain is Probable derlin-2 homolog (254 aa).

At 1 to 17 (MAQPFEDWYKNLPIVTK) the chain is on the cytoplasmic side. The helical transmembrane segment at 18–38 (IYMTGCVVTSVSVYLGLVGPL) threads the bilayer. Topologically, residues 39–95 (RLYLNFPLVFGKYEFWRLFTNFFFYDEIGMNFFFHMYFLVRHSRLLEESSFRGRSAD) are lumenal. The helical transmembrane segment at 96–116 (YLFMWIFGSFLLLIMDAFLFY) threads the bilayer. Topologically, residues 117-118 (TK) are cytoplasmic. A helical transmembrane segment spans residues 119–139 (IVTKVLFLAPSIAFMVIYVWS). The Lumenal portion of the chain corresponds to 140 to 146 (RRNPNMH). A helical transmembrane segment spans residues 147-167 (ISFLGLFTFSAPYLPWVILIM). Topologically, residues 168 to 254 (GYLFNHDLTT…FLNEDDLDQQ (87 aa)) are cytoplasmic.

This sequence belongs to the derlin family.

It localises to the endoplasmic reticulum membrane. Functionally, may be involved in the degradation process of specific misfolded endoplasmic reticulum (ER) luminal proteins. May also be involved in endoplasmic reticulum stress-induced pre-emptive quality control, a mechanism that selectively attenuates the translocation of newly synthesized proteins into the endoplasmic reticulum and reroutes them to the cytosol for proteasomal degradation. This is Probable derlin-2 homolog (derl2) from Dictyostelium discoideum (Social amoeba).